A 630-amino-acid chain; its full sequence is Plastin-1 (630 aa).

Positions 1-114 (MENNVTTISR…LGGTSSISTE (114 aa)) are fimbrin headpiece. 2 consecutive EF-hand domains span residues 11–46 (EELEELREAFNKIDIDNSGYVSDYELQDLFKEASLP) and 51–86 (KVREIIEKIFAVTDSNKDGKINFEEFVSLIQELKSK). Ca(2+) contacts are provided by Asp-24, Asp-26, Ser-28, Tyr-30, Glu-35, Asp-64, Asn-66, Asp-68, Lys-70, and Glu-75. Actin-binding regions lie at residues 108–375 (TSSI…LFNT) and 376–624 (YPAL…LMGR). The segment at 115–630 (GTQHSYSEEE…LMGRGLNKIK (516 aa)) is fimbrin core. Calponin-homology (CH) domains lie at 122–238 (EEEK…KVGL), 266–377 (LSPE…NTYP), 396–505 (SNEE…RRYT), and 517–626 (KVND…GRGL).

Monomer. In terms of processing, the N-terminus is blocked.

Its subcellular location is the cytoplasm. The protein resides in the cell projection. The protein localises to the stereocilium. In terms of biological role, actin-bundling protein. In the inner ear, it is required for stereocilia formation. Mediates liquid packing of actin filaments that is necessary for stereocilia to grow to their proper dimensions. The polypeptide is Plastin-1 (PLS1) (Gallus gallus (Chicken)).